A 308-amino-acid chain; its full sequence is MELRSIKTFHTIVKFGSFYKAAEILNYSQPTISMRMKQLEQDLGVLLFERGKSLQLTKAGKLFYERTGDLLMQYEALKHNLSDLKEEEAGIINIGVSEPTASLIFPEILKDFLMDYPKITVNIKVDDANTCSQKLLDGTIDFAVCGEPELILENYYHPFFYDTLNVIVSDQHPLAEKKAVHLSDLAEERFIFTPANCPIRLQIEQHLHRELGNRYKKMELTSSMSHEYYVRENIGISIFTSTAHSKPFNGTKVIPILNLDITPPIGLLTNQKEVHFDRATKDLIARITKRFQQRSKELEGTSDKTITG.

Residues 1 to 57 (MELRSIKTFHTIVKFGSFYKAAEILNYSQPTISMRMKQLEQDLGVLLFERGKSLQLT) form the HTH lysR-type domain. The segment at residues 18–37 (FYKAAEILNYSQPTISMRMK) is a DNA-binding region (H-T-H motif).

The protein belongs to the LysR transcriptional regulatory family.

In terms of biological role, positively regulates the expression of ytmI operon in response to the availability of sulfur sources. The chain is HTH-type transcriptional regulator YtlI (ytlI) from Bacillus subtilis (strain 168).